The chain runs to 492 residues: RNA-binding protein Nova-2 (492 aa).

The Bipartite nuclear localization signal motif lies at Lys10 to Asn26. The KH 1 domain maps to Glu32–Ile99. Lys112 is covalently cross-linked (Glycyl lysine isopeptide (Lys-Gly) (interchain with G-Cter in SUMO2)). 2 consecutive KH domains span residues Ala130–Ile196 and Lys406–Ile473.

As to quaternary structure, interacts with PTBP2; the interaction is direct. In terms of tissue distribution, brain. Expression restricted to astrocytes.

Its subcellular location is the nucleus. Its function is as follows. Functions to regulate alternative splicing in neurons by binding pre-mRNA in a sequence-specific manner to activate exon inclusion or exclusion. It binds specifically to the sequences 5'-YCAY-3' and regulates splicing in only a subset of regulated exons. Binding to an exonic 5'-YCAY-3' cluster changes the protein complexes assembled on pre-mRNA, blocking U1 snRNP binding and exon inclusion, whereas binding to an intronic 5'-YCAY-3' cluster enhances spliceosome assembly and exon inclusion. With NOVA1, they perform unique biological functions in different brain areas and cell types. Uniquely regulates alternative splicing events of a series of axon guidance related genes during cortical development, being essential for central nervous system development by regulating neural networks wiring. Regulates differentially alternative splicing on the same transcripts expressed in different neurons. This includes functional differences in transcripts expressed in cortical and cerebellar excitatory versus inhibitory neurons where is required for, respectively, development of laminar structure and motor coordination and synapse formation. Also the regulation the regulation of intron retention can sequester the trans-acting splicing factor PTBP2, acting as a variable cis-acting scaffolding platform for PTBP2 across various natural conditions. This chain is RNA-binding protein Nova-2, found in Homo sapiens (Human).